Reading from the N-terminus, the 454-residue chain is Bifunctional protein GlmU (454 aa).

The interval 1–226 (MALNVVILAA…AVEVEGANNR (226 aa)) is pyrophosphorylase. UDP-N-acetyl-alpha-D-glucosamine contacts are provided by residues 8–11 (LAAG), K22, Q73, 78–79 (GT), 100–102 (YGD), G137, E151, N166, and N224. D102 serves as a coordination point for Mg(2+). Mg(2+) is bound at residue N224. Residues 227 to 247 (VQLAQLERAYQARAAEKLMLE) form a linker region. The N-acetyltransferase stretch occupies residues 248–454 (GANLRDPARI…GWARPVKKAK (207 aa)). The UDP-N-acetyl-alpha-D-glucosamine site is built by R330 and K348. H360 functions as the Proton acceptor in the catalytic mechanism. Y363 and N374 together coordinate UDP-N-acetyl-alpha-D-glucosamine. Acetyl-CoA is bound by residues A377, 383-384 (NY), S402, A420, and R437.

The protein in the N-terminal section; belongs to the N-acetylglucosamine-1-phosphate uridyltransferase family. It in the C-terminal section; belongs to the transferase hexapeptide repeat family. As to quaternary structure, homotrimer. Requires Mg(2+) as cofactor.

It localises to the cytoplasm. It carries out the reaction alpha-D-glucosamine 1-phosphate + acetyl-CoA = N-acetyl-alpha-D-glucosamine 1-phosphate + CoA + H(+). The enzyme catalyses N-acetyl-alpha-D-glucosamine 1-phosphate + UTP + H(+) = UDP-N-acetyl-alpha-D-glucosamine + diphosphate. The protein operates within nucleotide-sugar biosynthesis; UDP-N-acetyl-alpha-D-glucosamine biosynthesis; N-acetyl-alpha-D-glucosamine 1-phosphate from alpha-D-glucosamine 6-phosphate (route II): step 2/2. It functions in the pathway nucleotide-sugar biosynthesis; UDP-N-acetyl-alpha-D-glucosamine biosynthesis; UDP-N-acetyl-alpha-D-glucosamine from N-acetyl-alpha-D-glucosamine 1-phosphate: step 1/1. Its pathway is bacterial outer membrane biogenesis; LPS lipid A biosynthesis. In terms of biological role, catalyzes the last two sequential reactions in the de novo biosynthetic pathway for UDP-N-acetylglucosamine (UDP-GlcNAc). The C-terminal domain catalyzes the transfer of acetyl group from acetyl coenzyme A to glucosamine-1-phosphate (GlcN-1-P) to produce N-acetylglucosamine-1-phosphate (GlcNAc-1-P), which is converted into UDP-GlcNAc by the transfer of uridine 5-monophosphate (from uridine 5-triphosphate), a reaction catalyzed by the N-terminal domain. In Shewanella piezotolerans (strain WP3 / JCM 13877), this protein is Bifunctional protein GlmU.